Here is a 129-residue protein sequence, read N- to C-terminus: Small ribosomal subunit protein uS11 (129 aa).

The protein belongs to the universal ribosomal protein uS11 family. In terms of assembly, part of the 30S ribosomal subunit. Interacts with proteins S7 and S18. Binds to IF-3.

Its function is as follows. Located on the platform of the 30S subunit, it bridges several disparate RNA helices of the 16S rRNA. Forms part of the Shine-Dalgarno cleft in the 70S ribosome. This Salmonella typhi protein is Small ribosomal subunit protein uS11.